Reading from the N-terminus, the 679-residue chain is MPKYHLKAPYSPKGDQPTAIARLVEGVNQGQRYQTLLGATGTGKTFTIANLIAQTGRPALVLAHNKTLAAQLCNEFREFFPDNSVEYFISYYDYYQPEAYVPVSDTYIAKTASINEEIDMLRHSATRSLFERNDVIVVASISCIYGLGIPSEYLKAAVKFKVGETLNLRSSLRELVDNQYSRNDFDITRGRFRVRGDVLEIGPAYEDRLVRIELFGDEVEAIRYLDPTTGEILQSLEAINIYPAKHFVTPKERLNVAVQAIRDELRERLQVLNEQGKLLEAQRLEQRTAYDLEMLREVGYCNGVENYARHLAGRSAGTPPECLIDYFPDDWLLVVDESHVTCSQLKAMYNGDQARKKVLIEHGFRLPSAADNRPLKSEEFWRKARQTVFVSATPGDWELTQSDGQLAEQVIRPTGVLDPLVEVRPTQGQVDDLLAEIRIRAKKQERVLITTLTKRMAEDLTDYLAENDVRVRYLHSEIHSIERIEIIQDLRLGEYDVLVGVNLLREGLDLPEVSLVVILDADKEGFLRAERSLIQTIGRAARHVDGMALLYADNLTDSMARAISETERRREIQKAYNELNGIVPRPAGKRASNSILSFLELSRRLQTDGKDADLVQITGRAVDALDSDQDSGLALDALPELIDQLETKMKEAAKNLNFEEAASLRDRIKKFRQKLIRNT.

One can recognise a Helicase ATP-binding domain in the interval 25-190; that stretch reads EGVNQGQRYQ…SRNDFDITRG (166 aa). 38-45 is an ATP binding site; it reads GATGTGKT. A Beta-hairpin motif is present at residues 91–114; it reads YYDYYQPEAYVPVSDTYIAKTASI. The Helicase C-terminal domain maps to 429–591; sequence QVDDLLAEIR…IVPRPAGKRA (163 aa). A UVR domain is found at 639–674; the sequence is PELIDQLETKMKEAAKNLNFEEAASLRDRIKKFRQK.

It belongs to the UvrB family. As to quaternary structure, forms a heterotetramer with UvrA during the search for lesions. Interacts with UvrC in an incision complex.

It is found in the cytoplasm. The UvrABC repair system catalyzes the recognition and processing of DNA lesions. A damage recognition complex composed of 2 UvrA and 2 UvrB subunits scans DNA for abnormalities. Upon binding of the UvrA(2)B(2) complex to a putative damaged site, the DNA wraps around one UvrB monomer. DNA wrap is dependent on ATP binding by UvrB and probably causes local melting of the DNA helix, facilitating insertion of UvrB beta-hairpin between the DNA strands. Then UvrB probes one DNA strand for the presence of a lesion. If a lesion is found the UvrA subunits dissociate and the UvrB-DNA preincision complex is formed. This complex is subsequently bound by UvrC and the second UvrB is released. If no lesion is found, the DNA wraps around the other UvrB subunit that will check the other stand for damage. This is UvrABC system protein B from Prochlorococcus marinus (strain MIT 9303).